A 72-amino-acid chain; its full sequence is Translation initiation factor IF-1 (72 aa).

Positions 1–72 (MAKEDSIEMQ…TKGRIVFRAR (72 aa)) constitute an S1-like domain.

It belongs to the IF-1 family. In terms of assembly, component of the 30S ribosomal translation pre-initiation complex which assembles on the 30S ribosome in the order IF-2 and IF-3, IF-1 and N-formylmethionyl-tRNA(fMet); mRNA recruitment can occur at any time during PIC assembly.

It is found in the cytoplasm. Its function is as follows. One of the essential components for the initiation of protein synthesis. Stabilizes the binding of IF-2 and IF-3 on the 30S subunit to which N-formylmethionyl-tRNA(fMet) subsequently binds. Helps modulate mRNA selection, yielding the 30S pre-initiation complex (PIC). Upon addition of the 50S ribosomal subunit IF-1, IF-2 and IF-3 are released leaving the mature 70S translation initiation complex. The sequence is that of Translation initiation factor IF-1 from Shewanella amazonensis (strain ATCC BAA-1098 / SB2B).